A 461-amino-acid chain; its full sequence is tRNA modification GTPase MnmE (461 aa).

(6S)-5-formyl-5,6,7,8-tetrahydrofolate contacts are provided by arginine 23, glutamate 88, and arginine 127. Residues 223 to 383 (GLNTVIVGKP…LKECIKNLFF (161 aa)) enclose the TrmE-type G domain. Asparagine 233 provides a ligand contact to K(+). GTP-binding positions include 233 to 238 (NVGKSS), 252 to 258 (TEIPGTT), and 277 to 280 (DTAG). Mg(2+) is bound at residue serine 237. 3 residues coordinate K(+): threonine 252, isoleucine 254, and threonine 257. Mg(2+) is bound at residue threonine 258. Lysine 461 is a binding site for (6S)-5-formyl-5,6,7,8-tetrahydrofolate.

It belongs to the TRAFAC class TrmE-Era-EngA-EngB-Septin-like GTPase superfamily. TrmE GTPase family. Homodimer. Heterotetramer of two MnmE and two MnmG subunits. K(+) serves as cofactor.

It is found in the cytoplasm. In terms of biological role, exhibits a very high intrinsic GTPase hydrolysis rate. Involved in the addition of a carboxymethylaminomethyl (cmnm) group at the wobble position (U34) of certain tRNAs, forming tRNA-cmnm(5)s(2)U34. This is tRNA modification GTPase MnmE from Clostridium botulinum (strain Okra / Type B1).